A 196-amino-acid chain; its full sequence is MELIERVNGHFLESMAAKQLAMEVLPGTIAQAAESMVACLMNEGKILACGNGGSAADAQHFAAEMVGRFEKERPGLAALSLATDTSALTAIGNDYDFERVFSKQVRALGQDGDLLLALSTSGNSLNVIEAIHAAHERQMGVIALTGRDGGQIADLMTADDILINVPVERTARIQEVHITIIHALCDAVDYMLLGGD.

The SIS domain maps to 36 to 196; it reads MVACLMNEGK…AVDYMLLGGD (161 aa). 51-53 contacts substrate; sequence NGG. Residues His60 and Glu64 each contribute to the Zn(2+) site. Substrate contacts are provided by residues Glu64, 93–94, 119–121, Ser124, and Gln174; these read ND and STS. Zn(2+) contacts are provided by Gln174 and His182.

It belongs to the SIS family. GmhA subfamily. As to quaternary structure, homotetramer. Zn(2+) is required as a cofactor.

It is found in the cytoplasm. It carries out the reaction 2 D-sedoheptulose 7-phosphate = D-glycero-alpha-D-manno-heptose 7-phosphate + D-glycero-beta-D-manno-heptose 7-phosphate. It participates in carbohydrate biosynthesis; D-glycero-D-manno-heptose 7-phosphate biosynthesis; D-glycero-alpha-D-manno-heptose 7-phosphate and D-glycero-beta-D-manno-heptose 7-phosphate from sedoheptulose 7-phosphate: step 1/1. In terms of biological role, catalyzes the isomerization of sedoheptulose 7-phosphate in D-glycero-D-manno-heptose 7-phosphate. In Laribacter hongkongensis (strain HLHK9), this protein is Phosphoheptose isomerase.